The chain runs to 392 residues: Putative nickel insertion protein (392 aa).

Belongs to the LarC family.

The sequence is that of Putative nickel insertion protein from Pelobacter propionicus (strain DSM 2379 / NBRC 103807 / OttBd1).